A 91-amino-acid chain; its full sequence is Small ribosomal subunit protein bS18 (91 aa).

This sequence belongs to the bacterial ribosomal protein bS18 family. In terms of assembly, part of the 30S ribosomal subunit. Forms a tight heterodimer with protein bS6.

Binds as a heterodimer with protein bS6 to the central domain of the 16S rRNA, where it helps stabilize the platform of the 30S subunit. In Thiobacillus denitrificans (strain ATCC 25259 / T1), this protein is Small ribosomal subunit protein bS18.